The chain runs to 250 residues: Probable transcriptional regulatory protein SCO1521 (250 aa).

It belongs to the TACO1 family.

It localises to the cytoplasm. This chain is Probable transcriptional regulatory protein SCO1521, found in Streptomyces coelicolor (strain ATCC BAA-471 / A3(2) / M145).